Consider the following 203-residue polypeptide: Endo-type membrane-bound lytic murein transglycosylase A (203 aa).

Positions 1–15 (MKLRWFAFLIVLLAG) are cleaved as a signal peptide. C16 carries N-palmitoyl cysteine lipidation. C16 carries the S-diacylglycerol cysteine lipid modification.

It belongs to the transglycosylase Slt family.

It is found in the cell outer membrane. The catalysed reaction is Endolytic cleavage of the (1-&gt;4)-beta-glycosidic linkage between N-acetylmuramic acid (MurNAc) and N-acetylglucosamine (GlcNAc) residues in peptidoglycan with concomitant formation of a 1,6-anhydrobond in the MurNAc residue.. In terms of biological role, murein-degrading enzyme. May play a role in recycling of muropeptides during cell elongation and/or cell division. Preferentially cleaves at a distance of more than two disaccharide units from the ends of the glycan chain. This Escherichia coli O1:K1 / APEC protein is Endo-type membrane-bound lytic murein transglycosylase A.